Reading from the N-terminus, the 482-residue chain is C3a anaphylatoxin chemotactic receptor (482 aa).

Topologically, residues 1 to 23 (MASFSAETNSTDLLSQPWNEPPV) are extracellular. Residue Asn9 is glycosylated (N-linked (GlcNAc...) asparagine). The chain crosses the membrane as a helical span at residues 24 to 46 (ILSMVILSLTFLLGLPGNGLVLW). Residues 47–57 (VAGLKMQRTVN) are Cytoplasmic-facing. Residues 58–80 (TIWFLHLTLADLLCCLSLPFSLA) form a helical membrane-spanning segment. Residues 81 to 96 (HLALQGQWPYGRFLCK) lie on the Extracellular side of the membrane. A disulfide bridge connects residues Cys95 and Cys172. Residues 97-118 (LIPSIIVLNMFASVFLLTAISL) form a helical membrane-spanning segment. Topologically, residues 119 to 139 (DRCLVVFKPIWCQNHRNVGMA) are cytoplasmic. Residues 140–160 (CSICGCIWVVAFVMCIPVFVY) form a helical membrane-spanning segment. At 161-340 (REIFTTDNHN…TPLVAITITR (180 aa)) the chain is on the extracellular side. Tyr174 and Tyr184 each carry sulfotyrosine. Asn194 carries N-linked (GlcNAc...) asparagine glycosylation. An O-linked (GalNAc...) serine glycan is attached at Ser266. The residue at position 318 (Tyr318) is a Sulfotyrosine. A helical transmembrane segment spans residues 341 to 360 (LVVGFLLPSVIMIACYSFIV). Over 361-377 (FRMQRGRFAKSQSKTFR) the chain is Cytoplasmic. A helical transmembrane segment spans residues 378–400 (VAVVVVAVFLVCWTPYHIFGVLS). At 401 to 417 (LLTDPETPLGKTLMSWD) the chain is on the extracellular side. Residues 418–438 (HVCIALASANSCFNPFLYALL) traverse the membrane as a helical segment. At 439–482 (GKDFRKKARQSIQGILEAAFSEELTRSTHCPSNNVISERNSTTV) the chain is on the cytoplasmic side. At Ser459 the chain carries Phosphoserine. Thr463 carries the phosphothreonine modification.

The protein belongs to the G-protein coupled receptor 1 family. As to quaternary structure, interacts with VGF-derived peptide TLQP-21. In terms of processing, among the sulfation sites Tyr-174 is essential for binding of C3a anaphylatoxin. Post-translationally, O-glycosylated. In terms of tissue distribution, widely expressed in several differentiated hematopoietic cell lines, in the lung, spleen, ovary, placenta, small intestine, throughout the brain, heart, and endothelial cells. Mostly expressed in lymphoid tissues.

Its subcellular location is the cell membrane. Its function is as follows. Receptor for the chemotactic and inflammatory peptide anaphylatoxin C3a. This receptor stimulates chemotaxis, granule enzyme release and superoxide anion production. In Homo sapiens (Human), this protein is C3a anaphylatoxin chemotactic receptor (C3AR1).